The chain runs to 758 residues: 5-methyltetrahydropteroyltriglutamate--homocysteine methyltransferase (758 aa).

5-methyltetrahydropteroyltri-L-glutamate-binding positions include 17–20 and Lys117; that span reads RELK. L-homocysteine is bound by residues 434-436 and Glu487; that span reads IGS. Residues 434–436 and Glu487 contribute to the L-methionine site; that span reads IGS. 5-methyltetrahydropteroyltri-L-glutamate-binding positions include 518–519 and Trp564; that span reads RC. Residue Asp602 participates in L-homocysteine binding. Asp602 is an L-methionine binding site. Glu608 is a 5-methyltetrahydropteroyltri-L-glutamate binding site. Residues His644, Cys646, and Glu668 each contribute to the Zn(2+) site. Catalysis depends on His697, which acts as the Proton donor. A Zn(2+)-binding site is contributed by Cys729.

It belongs to the vitamin-B12 independent methionine synthase family. Zn(2+) serves as cofactor.

The catalysed reaction is 5-methyltetrahydropteroyltri-L-glutamate + L-homocysteine = tetrahydropteroyltri-L-glutamate + L-methionine. It participates in amino-acid biosynthesis; L-methionine biosynthesis via de novo pathway; L-methionine from L-homocysteine (MetE route): step 1/1. In terms of biological role, catalyzes the transfer of a methyl group from 5-methyltetrahydrofolate to homocysteine resulting in methionine formation. The polypeptide is 5-methyltetrahydropteroyltriglutamate--homocysteine methyltransferase (Yersinia pestis bv. Antiqua (strain Antiqua)).